Reading from the N-terminus, the 182-residue chain is Orotate phosphoribosyltransferase (182 aa).

Residues Arg-91, Lys-92, Lys-95, His-97, and 117–125 (EDVTTTGGS) each bind 5-phospho-alpha-D-ribose 1-diphosphate. Orotate is bound by residues Thr-121 and Arg-149.

This sequence belongs to the purine/pyrimidine phosphoribosyltransferase family. PyrE subfamily. In terms of assembly, homodimer. Mg(2+) serves as cofactor.

It carries out the reaction orotidine 5'-phosphate + diphosphate = orotate + 5-phospho-alpha-D-ribose 1-diphosphate. The protein operates within pyrimidine metabolism; UMP biosynthesis via de novo pathway; UMP from orotate: step 1/2. Functionally, catalyzes the transfer of a ribosyl phosphate group from 5-phosphoribose 1-diphosphate to orotate, leading to the formation of orotidine monophosphate (OMP). The protein is Orotate phosphoribosyltransferase of Pyrococcus abyssi (strain GE5 / Orsay).